Reading from the N-terminus, the 290-residue chain is MGANISGGSPEFDRNDDVYSRKLRLVDLPENCVALIMTRLDPPEICRLARLNRMFRRASSADFIWESKLPANYRVIAHKVFDEITLTKLIKKDLYAKLSQPNLFDDGTKELWIDKNTGRLCLSISSKALRITGIDDRRYWSHIPTDESRFQSAAYVQQIWWFEVGGEFEIQFPSGTYSLFFRIQLGKTSKRLGRRICNSEHIHGWDIKPVRFQLATSDNQQAVSLCYLNNNPGSWSHYHVGDFKVTNPDVSTGIKFSMTQIDCTHTKGGLCIDSVLILPKECAKEVIGSQ.

One can recognise an F-box domain in the interval 21-67 (RKLRLVDLPENCVALIMTRLDPPEICRLARLNRMFRRASSADFIWES).

As to quaternary structure, part of a SCF (ASK-cullin-F-box) protein ligase complex. Interacts with SKP1A/ASK1, SKP1B/ASK2, ASK5, ASK11 and ASK13.

It is found in the nucleus. It participates in protein modification; protein ubiquitination. Functionally, component of SCF(ASK-cullin-F-box) E3 ubiquitin ligase complexes, which may mediate the ubiquitination and subsequent proteasomal degradation of target proteins. This chain is F-box protein PP2-A13 (PP2A13), found in Arabidopsis thaliana (Mouse-ear cress).